A 113-amino-acid polypeptide reads, in one-letter code: DNA-binding protein Mevan_1162 (113 aa).

Over residues methionine 1–glutamine 12 the composition is skewed to basic and acidic residues. Residues methionine 1 to glutamate 22 form a disordered region.

The protein belongs to the PDCD5 family.

In Methanococcus vannielii (strain ATCC 35089 / DSM 1224 / JCM 13029 / OCM 148 / SB), this protein is DNA-binding protein Mevan_1162.